The primary structure comprises 539 residues: Putative cysteine ligase BshC (539 aa).

Residues 455 to 475 (LQKNAAFIQDQLLFLERTVTK) adopt a coiled-coil conformation.

It belongs to the BshC family.

Involved in bacillithiol (BSH) biosynthesis. May catalyze the last step of the pathway, the addition of cysteine to glucosamine malate (GlcN-Mal) to generate BSH. The protein is Putative cysteine ligase BshC of Bacillus velezensis (strain DSM 23117 / BGSC 10A6 / LMG 26770 / FZB42) (Bacillus amyloliquefaciens subsp. plantarum).